We begin with the raw amino-acid sequence, 205 residues long: Histidine biosynthesis bifunctional protein HisIE (205 aa).

The tract at residues M1 to I115 is phosphoribosyl-AMP cyclohydrolase. Residues L116–K205 form a phosphoribosyl-ATP pyrophosphohydrolase region.

This sequence in the N-terminal section; belongs to the PRA-CH family. In the C-terminal section; belongs to the PRA-PH family.

The protein resides in the cytoplasm. The catalysed reaction is 1-(5-phospho-beta-D-ribosyl)-ATP + H2O = 1-(5-phospho-beta-D-ribosyl)-5'-AMP + diphosphate + H(+). It catalyses the reaction 1-(5-phospho-beta-D-ribosyl)-5'-AMP + H2O = 1-(5-phospho-beta-D-ribosyl)-5-[(5-phospho-beta-D-ribosylamino)methylideneamino]imidazole-4-carboxamide. It functions in the pathway amino-acid biosynthesis; L-histidine biosynthesis; L-histidine from 5-phospho-alpha-D-ribose 1-diphosphate: step 2/9. The protein operates within amino-acid biosynthesis; L-histidine biosynthesis; L-histidine from 5-phospho-alpha-D-ribose 1-diphosphate: step 3/9. In Caldanaerobacter subterraneus subsp. tengcongensis (strain DSM 15242 / JCM 11007 / NBRC 100824 / MB4) (Thermoanaerobacter tengcongensis), this protein is Histidine biosynthesis bifunctional protein HisIE.